The chain runs to 467 residues: Zinc finger protein mex-6 (467 aa).

Composition is skewed to low complexity over residues 1–22 (MTAT…ATAQ) and 179–195 (STTR…LPTS). Disordered regions lie at residues 1-35 (MTAT…QQHP) and 163-209 (TNPQ…NRNS). Residue Thr-190 is modified to Phosphothreonine. The span at 196 to 207 (REYETVQRDRNR) shows a compositional bias: basic and acidic residues. 2 consecutive C3H1-type zinc fingers follow at residues 273-302 (NFKT…HGLK) and 317-347 (KYKT…HPSD). The disordered stretch occupies residues 425–451 (INENDLPPHLRRIRRGNPPVTRSRPSF). Ser-457 carries the phosphoserine modification.

Interacts (probably when phosphorylated on Thr-190) with plk-1 (via POLO box domain) and plk-2 (via POLO box domain). Phosphorylation on Ser-457 by par-1 promotes localization of the protein to the anterior cytoplasm of the zygote.

The protein localises to the cytoplasm. In terms of biological role, functions with mex-5 to affect embryonic viability, establish soma germline asymmetry in embryos and establish plk-1, pie-1, mex-1, and pos-1 asymmetry in embryos. Also affects formation of intestinal cells. This is Zinc finger protein mex-6 (mex-6) from Caenorhabditis elegans.